The primary structure comprises 55 residues: uncharacterized protein (55 aa).

The N-terminal stretch at 1-19 (MQILLVVRLVLLWLGGLSA) is a signal peptide.

This is an uncharacterized protein from Orgyia pseudotsugata multicapsid polyhedrosis virus (OpMNPV).